A 182-amino-acid polypeptide reads, in one-letter code: ATP-dependent protease subunit HslV (182 aa).

Residue Thr-6 is part of the active site. Residues Ala-164, Cys-167, and Thr-170 each coordinate Na(+).

The protein belongs to the peptidase T1B family. HslV subfamily. A double ring-shaped homohexamer of HslV is capped on each side by a ring-shaped HslU homohexamer. The assembly of the HslU/HslV complex is dependent on binding of ATP.

The protein localises to the cytoplasm. It catalyses the reaction ATP-dependent cleavage of peptide bonds with broad specificity.. Its activity is regulated as follows. Allosterically activated by HslU binding. Its function is as follows. Protease subunit of a proteasome-like degradation complex believed to be a general protein degrading machinery. This Borreliella afzelii (strain PKo) (Borrelia afzelii) protein is ATP-dependent protease subunit HslV.